The following is a 327-amino-acid chain: Biotin synthase (327 aa).

Residues 52 to 279 enclose the Radical SAM core domain; that stretch reads NAIQRSTLLS…TSWVRLSAGR (228 aa). The [4Fe-4S] cluster site is built by Cys67, Cys71, and Cys74. [2Fe-2S] cluster contacts are provided by Cys111, Cys142, Cys202, and Arg274.

The protein belongs to the radical SAM superfamily. Biotin synthase family. Homodimer. The cofactor is [4Fe-4S] cluster. It depends on [2Fe-2S] cluster as a cofactor.

It catalyses the reaction (4R,5S)-dethiobiotin + (sulfur carrier)-SH + 2 reduced [2Fe-2S]-[ferredoxin] + 2 S-adenosyl-L-methionine = (sulfur carrier)-H + biotin + 2 5'-deoxyadenosine + 2 L-methionine + 2 oxidized [2Fe-2S]-[ferredoxin]. It participates in cofactor biosynthesis; biotin biosynthesis; biotin from 7,8-diaminononanoate: step 2/2. Its function is as follows. Catalyzes the conversion of dethiobiotin (DTB) to biotin by the insertion of a sulfur atom into dethiobiotin via a radical-based mechanism. This is Biotin synthase from Dechloromonas aromatica (strain RCB).